The sequence spans 583 residues: Aspartate--tRNA ligase (583 aa).

Glu-174 is a binding site for L-aspartate. The segment at 198 to 201 (QITK) is aspartate. Residue Arg-220 coordinates L-aspartate. Residues 220-222 (RDE) and Gln-229 each bind ATP. Position 443 (His-443) interacts with L-aspartate. ATP is bound at residue Glu-477. Arg-484 contacts L-aspartate. 529–532 (GLDR) is an ATP binding site.

Belongs to the class-II aminoacyl-tRNA synthetase family. Type 1 subfamily. As to quaternary structure, homodimer.

The protein localises to the cytoplasm. The enzyme catalyses tRNA(Asp) + L-aspartate + ATP = L-aspartyl-tRNA(Asp) + AMP + diphosphate. Its function is as follows. Catalyzes the attachment of L-aspartate to tRNA(Asp) in a two-step reaction: L-aspartate is first activated by ATP to form Asp-AMP and then transferred to the acceptor end of tRNA(Asp). This is Aspartate--tRNA ligase from Streptococcus thermophilus (strain CNRZ 1066).